Reading from the N-terminus, the 148-residue chain is Large ribosomal subunit protein uL22 (148 aa).

Belongs to the universal ribosomal protein uL22 family. In terms of assembly, part of the 50S ribosomal subunit.

This protein binds specifically to 23S rRNA; its binding is stimulated by other ribosomal proteins, e.g. L4, L17, and L20. It is important during the early stages of 50S assembly. It makes multiple contacts with different domains of the 23S rRNA in the assembled 50S subunit and ribosome. In terms of biological role, the globular domain of the protein is located near the polypeptide exit tunnel on the outside of the subunit, while an extended beta-hairpin is found that lines the wall of the exit tunnel in the center of the 70S ribosome. This is Large ribosomal subunit protein uL22 from Thermosipho africanus (strain TCF52B).